The chain runs to 347 residues: MMKVCVIEGDGIGKEVIPEAIKILNELGEFEIIKGEAGLECLKKYGNALPEDTIEKAKEADIILFGAITSPKPGEVKNYKSPIITLRKMFHLYANVRPINNFGIGQLIGKIADYEFLNAKNIDIVIIRENTEDLYVGRERLENDTAIAERVITRKGSERIIRFAFEYAIKNNRKKVSCIHKANVLRITDGLFLEVFNEIKKHYNIEADDYLVDSTAMNLIKHPEKFDVIVTTNMFGDILSDEASALIGGLGLAPSANIGDDKALFEPVHGSAPDIAGKGIANPMASILSIAMLFDYIGEKEKGDLIREAVKYCLINKKVTPDLGGDLKTKDVGDEILNYIRKKLKGY.

Residue 68–70 coordinates NADH; that stretch reads ITS. Ser-70 serves as a coordination point for (2R,3S)-homoisocitrate. The residue at position 81 (Ser-81) is a Phosphoserine. Arg-87, Arg-97, Arg-128, Tyr-135, Lys-181, and Asn-183 together coordinate (2R,3S)-homoisocitrate. Asn-183 lines the NADH pocket. Residues Asp-213, Asp-237, and Asp-241 each contribute to the Mg(2+) site. NADH contacts are provided by residues 270–274 and Asn-282; that span reads GSAPD.

Belongs to the isocitrate and isopropylmalate dehydrogenases family. Requires Mg(2+) as cofactor.

It carries out the reaction (2R,3S)-homoisocitrate + NAD(+) = 2-oxoadipate + CO2 + NADH. It catalyses the reaction (2R,3S)-iso(homo)2citrate + NAD(+) = 2-oxoheptanedioate + CO2 + NADH. The catalysed reaction is (2R,3S)-iso(homo)3citrate + NAD(+) = 2-oxosuberate + CO2 + NADH. It participates in organic acid metabolism; 2-oxosuberate biosynthesis. In terms of biological role, catalyzes the NAD-dependent oxidation and decarboxylation of (2R,3S)-homoisocitrate, (2R,3S)-homo(2)-isocitrate and (2R,3S)-homo(3)-isocitrate, into 2-oxoadipate, 2-oxopimelate (2-oxoheptanedioate), and 2-oxosuberate, respectively. All these substrates are intermediates in the biosynthesis of biotin and of 7-mercaptoheptanoate, a moiety of coenzyme B in methanoarchaea. Is also able to produce 2-oxoazelate from (2R,3S)-homo(4)-isocitrate in vitro, but this substrate is probably not physiologically relevant. Is unable to use any isomer of isocitrate or isopropylmalate as a substrate, and NADP as an oxidant. The polypeptide is Homoisocitrate dehydrogenase (aksF) (Methanocaldococcus jannaschii (strain ATCC 43067 / DSM 2661 / JAL-1 / JCM 10045 / NBRC 100440) (Methanococcus jannaschii)).